The primary structure comprises 457 residues: Siroheme synthase (457 aa).

The precorrin-2 dehydrogenase /sirohydrochlorin ferrochelatase stretch occupies residues 1–204 (MDHLPIFCQL…NDQKAITETT (204 aa)). NAD(+) is bound by residues 22-23 (DV) and 43-44 (LA). Ser-128 carries the post-translational modification Phosphoserine. Residues 216 to 457 (GEVVLVGAGP…RDKLNWFSNH (242 aa)) are uroporphyrinogen-III C-methyltransferase. Position 225 (Pro-225) interacts with S-adenosyl-L-methionine. Asp-248 functions as the Proton acceptor in the catalytic mechanism. Catalysis depends on Lys-270, which acts as the Proton donor. S-adenosyl-L-methionine is bound by residues 301 to 303 (GGD), Ile-306, 331 to 332 (TA), Met-382, and Gly-411.

This sequence in the N-terminal section; belongs to the precorrin-2 dehydrogenase / sirohydrochlorin ferrochelatase family. The protein in the C-terminal section; belongs to the precorrin methyltransferase family.

The catalysed reaction is uroporphyrinogen III + 2 S-adenosyl-L-methionine = precorrin-2 + 2 S-adenosyl-L-homocysteine + H(+). The enzyme catalyses precorrin-2 + NAD(+) = sirohydrochlorin + NADH + 2 H(+). It carries out the reaction siroheme + 2 H(+) = sirohydrochlorin + Fe(2+). Its pathway is cofactor biosynthesis; adenosylcobalamin biosynthesis; precorrin-2 from uroporphyrinogen III: step 1/1. It participates in cofactor biosynthesis; adenosylcobalamin biosynthesis; sirohydrochlorin from precorrin-2: step 1/1. The protein operates within porphyrin-containing compound metabolism; siroheme biosynthesis; precorrin-2 from uroporphyrinogen III: step 1/1. It functions in the pathway porphyrin-containing compound metabolism; siroheme biosynthesis; siroheme from sirohydrochlorin: step 1/1. Its pathway is porphyrin-containing compound metabolism; siroheme biosynthesis; sirohydrochlorin from precorrin-2: step 1/1. Its function is as follows. Multifunctional enzyme that catalyzes the SAM-dependent methylations of uroporphyrinogen III at position C-2 and C-7 to form precorrin-2 via precorrin-1. Then it catalyzes the NAD-dependent ring dehydrogenation of precorrin-2 to yield sirohydrochlorin. Finally, it catalyzes the ferrochelation of sirohydrochlorin to yield siroheme. In Escherichia coli O7:K1 (strain IAI39 / ExPEC), this protein is Siroheme synthase.